The chain runs to 971 residues: Isoleucine--tRNA ligase (971 aa).

Residues 60 to 70 (PYANGDLHIGH) carry the 'HIGH' region motif. Glu563 lines the L-isoleucyl-5'-AMP pocket. The 'KMSKS' region motif lies at 604-608 (KMSKS). ATP is bound at residue Lys607. Zn(2+)-binding residues include Cys922, Cys925, Cys942, and Cys945.

The protein belongs to the class-I aminoacyl-tRNA synthetase family. IleS type 1 subfamily. Monomer. It depends on Zn(2+) as a cofactor.

It localises to the cytoplasm. It catalyses the reaction tRNA(Ile) + L-isoleucine + ATP = L-isoleucyl-tRNA(Ile) + AMP + diphosphate. Functionally, catalyzes the attachment of isoleucine to tRNA(Ile). As IleRS can inadvertently accommodate and process structurally similar amino acids such as valine, to avoid such errors it has two additional distinct tRNA(Ile)-dependent editing activities. One activity is designated as 'pretransfer' editing and involves the hydrolysis of activated Val-AMP. The other activity is designated 'posttransfer' editing and involves deacylation of mischarged Val-tRNA(Ile). The chain is Isoleucine--tRNA ligase from Acaryochloris marina (strain MBIC 11017).